Here is a 518-residue protein sequence, read N- to C-terminus: Cytochrome P450 monooxygenase COX1 (518 aa).

The chain crosses the membrane as a helical span at residues 7–25 (VLIALSSIVVAYFVKTALA). Residues Asn48, Asn100, Asn292, Asn302, and Asn351 are each glycosylated (N-linked (GlcNAc...) asparagine). Cys450 is a heme binding site. A glycan (N-linked (GlcNAc...) asparagine) is linked at Asn457.

It belongs to the cytochrome P450 family. Heme is required as a cofactor.

Its subcellular location is the membrane. It participates in secondary metabolite biosynthesis. In terms of biological role, cytochrome P450 monooxygenase; part of the gene cluster that mediates the biosynthesis of alpha-cuprenene and oxidized derivatives. The alpha-cuprenene synthase COP6 is the only sesquiterpene synthase identified in C.cinereus that appears to be part of a biosynthetic gene cluster and is highly specific since it catalyzes the cyclization of (2E,6E)-farnesyl diphosphate into only one product, alpha-cuprenene. The cytochrome P450 monooxygenase COX2 then oxidizes the cyclohexadiene ring of alpha-cuprenene at positions 1 and 4, yielding first alpha-cuparene, followed by alpha-cuparophenol and a further yet unidentified compound resulting from one additional oxidation step. The cytochrome P450 monooxygenase COX1 then likely catalyzes the oxidation at position 9 of the pentane ring of alpha-cuprenene to give the corresponding hydroxy or ketone derivatives. This Coprinopsis cinerea (strain Okayama-7 / 130 / ATCC MYA-4618 / FGSC 9003) (Inky cap fungus) protein is Cytochrome P450 monooxygenase COX1.